The sequence spans 206 residues: Small ribosomal subunit protein uS4 (206 aa).

Residues 1–16 (MTKRQESKYKIDRRMG) are compositionally biased toward basic and acidic residues. Residues 1–46 (MTKRQESKYKIDRRMGENIWGRPKSPVNRREYGPGQHGQRRKGKLS) are disordered. In terms of domain architecture, S4 RNA-binding spans 94–154 (RRLDAVVYRA…EKSKQLAIVL (61 aa)).

It belongs to the universal ribosomal protein uS4 family. As to quaternary structure, part of the 30S ribosomal subunit. Contacts protein S5. The interaction surface between S4 and S5 is involved in control of translational fidelity.

In terms of biological role, one of the primary rRNA binding proteins, it binds directly to 16S rRNA where it nucleates assembly of the body of the 30S subunit. Functionally, with S5 and S12 plays an important role in translational accuracy. In Parvibaculum lavamentivorans (strain DS-1 / DSM 13023 / NCIMB 13966), this protein is Small ribosomal subunit protein uS4.